The sequence spans 72 residues: Translation initiation factor IF-1 (72 aa).

The S1-like domain occupies 1 to 72 (MAKEESIEIE…TKGRITYRYK (72 aa)).

Belongs to the IF-1 family. Component of the 30S ribosomal translation pre-initiation complex which assembles on the 30S ribosome in the order IF-2 and IF-3, IF-1 and N-formylmethionyl-tRNA(fMet); mRNA recruitment can occur at any time during PIC assembly.

The protein resides in the cytoplasm. In terms of biological role, one of the essential components for the initiation of protein synthesis. Stabilizes the binding of IF-2 and IF-3 on the 30S subunit to which N-formylmethionyl-tRNA(fMet) subsequently binds. Helps modulate mRNA selection, yielding the 30S pre-initiation complex (PIC). Upon addition of the 50S ribosomal subunit IF-1, IF-2 and IF-3 are released leaving the mature 70S translation initiation complex. This is Translation initiation factor IF-1 from Chlorobium chlorochromatii (strain CaD3).